Consider the following 214-residue polypeptide: MNIILMGLPGAGKGTQAERIVKEFDIPHISTGDMFRAAVKNETPLGLEAKSYMDKGHLVPDEVVIGIVRERLSMDDCAKGFLLDGFPRTVPQAEALTATVKELGREIDHVININVQREQLIERLTGRWICPVCGASYHTMFNPPKEAGVCDKDGGKLYQREDDKIEVVTQRLDVNIAQTQPLIDYYSAQELLRDIDGEQDIQVVFAEIKSLLRG.

10–15 contacts ATP; that stretch reads GAGKGT. The segment at 30-59 is NMP; sequence STGDMFRAAVKNETPLGLEAKSYMDKGHLV. AMP-binding positions include Thr-31, Arg-36, 57–59, 85–88, and Gln-92; these read HLV and GFPR. The interval 126–163 is LID; it reads GRWICPVCGASYHTMFNPPKEAGVCDKDGGKLYQREDD. Arg-127 serves as a coordination point for ATP. Zn(2+)-binding residues include Cys-130 and Cys-133. 136-137 serves as a coordination point for ATP; sequence SY. Zn(2+)-binding residues include Cys-150 and Asp-153. The AMP site is built by Arg-160 and Arg-171. Residue Gln-199 participates in ATP binding.

It belongs to the adenylate kinase family. Monomer.

It is found in the cytoplasm. The enzyme catalyses AMP + ATP = 2 ADP. It functions in the pathway purine metabolism; AMP biosynthesis via salvage pathway; AMP from ADP: step 1/1. Catalyzes the reversible transfer of the terminal phosphate group between ATP and AMP. Plays an important role in cellular energy homeostasis and in adenine nucleotide metabolism. This Brevibacillus brevis (strain 47 / JCM 6285 / NBRC 100599) protein is Adenylate kinase.